A 274-amino-acid polypeptide reads, in one-letter code: NADPH-dependent 7-cyano-7-deazaguanine reductase (274 aa).

81–83 (IES) is a binding site for substrate. An NADPH-binding site is contributed by 83-84 (SK). The active-site Thioimide intermediate is Cys-182. The active-site Proton donor is Asp-189. Residue 221–222 (HE) participates in substrate binding. 250 to 251 (RG) is an NADPH binding site.

This sequence belongs to the GTP cyclohydrolase I family. QueF type 2 subfamily. Homodimer.

The protein resides in the cytoplasm. The enzyme catalyses 7-aminomethyl-7-carbaguanine + 2 NADP(+) = 7-cyano-7-deazaguanine + 2 NADPH + 3 H(+). It functions in the pathway tRNA modification; tRNA-queuosine biosynthesis. Catalyzes the NADPH-dependent reduction of 7-cyano-7-deazaguanine (preQ0) to 7-aminomethyl-7-deazaguanine (preQ1). The protein is NADPH-dependent 7-cyano-7-deazaguanine reductase of Hahella chejuensis (strain KCTC 2396).